Consider the following 90-residue polypeptide: Acylphosphatase (90 aa).

The region spanning 3–90 (AVTLKATGRV…QNYHDFRITN (88 aa)) is the Acylphosphatase-like domain. Catalysis depends on residues R18 and N36.

The protein belongs to the acylphosphatase family.

The enzyme catalyses an acyl phosphate + H2O = a carboxylate + phosphate + H(+). The sequence is that of Acylphosphatase (acyP) from Lactiplantibacillus plantarum (strain ATCC BAA-793 / NCIMB 8826 / WCFS1) (Lactobacillus plantarum).